Here is a 303-residue protein sequence, read N- to C-terminus: ATP phosphoribosyltransferase (303 aa).

This sequence belongs to the ATP phosphoribosyltransferase family. Long subfamily. Mg(2+) is required as a cofactor.

Its subcellular location is the cytoplasm. The catalysed reaction is 1-(5-phospho-beta-D-ribosyl)-ATP + diphosphate = 5-phospho-alpha-D-ribose 1-diphosphate + ATP. Its pathway is amino-acid biosynthesis; L-histidine biosynthesis; L-histidine from 5-phospho-alpha-D-ribose 1-diphosphate: step 1/9. With respect to regulation, feedback inhibited by histidine. Its function is as follows. Catalyzes the condensation of ATP and 5-phosphoribose 1-diphosphate to form N'-(5'-phosphoribosyl)-ATP (PR-ATP). Has a crucial role in the pathway because the rate of histidine biosynthesis seems to be controlled primarily by regulation of HisG enzymatic activity. The sequence is that of ATP phosphoribosyltransferase from Haemophilus influenzae (strain PittEE).